Consider the following 142-residue polypeptide: Nucleoside diphosphate kinase (142 aa).

ATP-binding residues include K11, F59, R87, T93, R104, and N114. The Pros-phosphohistidine intermediate role is filled by H117.

Belongs to the NDK family. In terms of assembly, homotetramer. It depends on Mg(2+) as a cofactor.

It localises to the cytoplasm. The enzyme catalyses dZDP + ATP = dZTP + ADP. The catalysed reaction is a 2'-deoxyribonucleoside 5'-diphosphate + ATP = a 2'-deoxyribonucleoside 5'-triphosphate + ADP. It carries out the reaction a ribonucleoside 5'-diphosphate + ATP = a ribonucleoside 5'-triphosphate + ADP. It functions in the pathway purine metabolism. Major role in the synthesis of nucleoside triphosphates other than ATP. The ATP gamma phosphate is transferred to the NDP beta phosphate via a ping-pong mechanism, using a phosphorylated active-site intermediate. In terms of biological role, (Microbial infection) Catalyzes the phosphorylation of dZDP to dZTP, when the bacterium is infected by a phage that produces the substrate for the synthesis of dZTP (2- amino-2'-deoxyadenosine 5'-triphosphate), which is then used by the phage as a DNA polymerase substrate. The chain is Nucleoside diphosphate kinase from Vibrio cholerae serotype O1 (strain ATCC 39315 / El Tor Inaba N16961).